A 654-amino-acid polypeptide reads, in one-letter code: Fimbrin-2 (654 aa).

4 consecutive Calponin-homology (CH) domains span residues 124–241 (DSEK…KIQL), 269–372 (LPPE…QHRN), 394–500 (SREE…RYNI), and 515–623 (EITD…YWTL). Actin-binding regions lie at residues 124-372 (DSEK…QHRN) and 394-623 (SREE…YWTL).

In terms of assembly, interacts with F-actin.

Its subcellular location is the cytoplasm. It is found in the cytoskeleton. Its function is as follows. Cross-links actin filaments (F-actin). Stabilizes and prevents F-actin depolymerization mediated by profilin. May regulate actin cytoarchitecture, cell cycle, cell division, cell elongation and cytoplasmic tractus. The chain is Fimbrin-2 from Arabidopsis thaliana (Mouse-ear cress).